A 127-amino-acid polypeptide reads, in one-letter code: Small ribosomal subunit protein eS8 (127 aa).

Positions 1 to 31 (MTIFQGKSGKKATGGSLKQSRKKRRFELGRE) are disordered.

Belongs to the eukaryotic ribosomal protein eS8 family. Part of the 30S ribosomal subunit.

The protein is Small ribosomal subunit protein eS8 (rps8e) of Thermoplasma acidophilum (strain ATCC 25905 / DSM 1728 / JCM 9062 / NBRC 15155 / AMRC-C165).